The chain runs to 203 residues: MSKVIGITGGIATGKSTVSELLTAYGFKIVDADIASREAVKKGSKGLEQVKEIFGEEAIDENGEMNRQYVGEIVFNHPDLREALNEIVHPIVREIMEQEKNNYLEHGYHVIMDIPLLYENELQDTVDEVWVVYTSESIQIDRLMERNNLSLEDAKARVYSQISIDKKSRMADHVIDNLGDKLELKQNLQKLLEEEGYIQSESE.

Residues 4–203 (VIGITGGIAT…EEGYIQSESE (200 aa)) form the DPCK domain. An ATP-binding site is contributed by 12-17 (ATGKST).

Belongs to the CoaE family.

The protein localises to the cytoplasm. The catalysed reaction is 3'-dephospho-CoA + ATP = ADP + CoA + H(+). The protein operates within cofactor biosynthesis; coenzyme A biosynthesis; CoA from (R)-pantothenate: step 5/5. Catalyzes the phosphorylation of the 3'-hydroxyl group of dephosphocoenzyme A to form coenzyme A. In Staphylococcus epidermidis (strain ATCC 35984 / DSM 28319 / BCRC 17069 / CCUG 31568 / BM 3577 / RP62A), this protein is Dephospho-CoA kinase.